The chain runs to 378 residues: Cobalt-precorrin-5B C(1)-methyltransferase (378 aa).

Belongs to the CbiD family.

The enzyme catalyses Co-precorrin-5B + S-adenosyl-L-methionine = Co-precorrin-6A + S-adenosyl-L-homocysteine. Its pathway is cofactor biosynthesis; adenosylcobalamin biosynthesis; cob(II)yrinate a,c-diamide from sirohydrochlorin (anaerobic route): step 6/10. Catalyzes the methylation of C-1 in cobalt-precorrin-5B to form cobalt-precorrin-6A. The chain is Cobalt-precorrin-5B C(1)-methyltransferase from Photorhabdus laumondii subsp. laumondii (strain DSM 15139 / CIP 105565 / TT01) (Photorhabdus luminescens subsp. laumondii).